A 251-amino-acid polypeptide reads, in one-letter code: DNA polymerase sliding clamp 2 (251 aa).

This sequence belongs to the PCNA family. Heterotrimer. The subunits circularize to form a toroid; DNA passes through its center. Replication factor C (RFC) is required to load the toroid on the DNA.

Its function is as follows. Sliding clamp subunit that acts as a moving platform for DNA processing. Responsible for tethering the catalytic subunit of DNA polymerase and other proteins to DNA during high-speed replication. In Aeropyrum pernix (strain ATCC 700893 / DSM 11879 / JCM 9820 / NBRC 100138 / K1), this protein is DNA polymerase sliding clamp 2.